A 959-amino-acid polypeptide reads, in one-letter code: Protein moonraker (959 aa).

Positions 124–156 (LPHSSHKGMHTKVERKDSKSQDVCHCSHQPSRV) are disordered. The span at 134–145 (TKVERKDSKSQD) shows a compositional bias: basic and acidic residues. S279 carries the post-translational modification Phosphoserine. Basic and acidic residues predominate over residues 456–470 (EEAPRIEDNGTDFKD). Disordered stretches follow at residues 456–560 (EEAP…ASPK) and 572–610 (RDAA…AESS). Residues 515 to 533 (PNQPYSKSRLQQTTVSSRL) show a composition bias toward polar residues. The span at 547-558 (WIPPNPTSPPAS) shows a compositional bias: pro residues. A coiled-coil region spans residues 582-674 (QEDIHKESQL…TQLADKVEEA (93 aa)). A compositionally biased stretch (basic and acidic residues) spans 583–599 (EDIHKESQLRGDAEQEA). A Phosphoserine modification is found at S691. Disordered stretches follow at residues 692–721 (SVEA…SDVP) and 848–883 (LDES…PLSV). Over residues 707 to 717 (AAAAAQPAEQA) the composition is skewed to low complexity. Residues 857–874 (GSEKREAPLPLSREDLHQ) show a composition bias toward basic and acidic residues. The tract at residues 877–959 (GQTPLSVPPR…FTSEFLEAAA (83 aa)) is necessary and sufficient for CEP20-binding.

In terms of assembly, interacts with CEP63 and WDR62. Forms a complex with OFD1 and CEP20/FOR20. Interacts with PCM1.

Its subcellular location is the cytoplasm. The protein resides in the cytoskeleton. It is found in the microtubule organizing center. The protein localises to the centrosome. It localises to the centriolar satellite. In terms of biological role, involved in centriole duplication. Positively regulates CEP63 centrosomal localization. Required for WDR62 centrosomal localization and promotes the centrosomal localization of CDK2. May play a role in cilium assembly. This chain is Protein moonraker (Kiaa0753), found in Mus musculus (Mouse).